Here is a 352-residue protein sequence, read N- to C-terminus: MAIYLDKLKMPIIIGLIVLIIASLTGYYYYTHNTKTSEIIIFAAGSLKIPLDEIASKYSEKYGVNIYIEASGSVEAIRKVTDLGREADIIAVADYRLIPTFLVPNYTSWYIGFATNQVVLVYTDKSKYHEILENNPSEWYKILMRNDVKWGFSDPNKDPCGYRSVGIIGLASIYYNDTSILENLLLNKTNIAVEKVNDTLNLIVPADLKVSENSNLIIRSKSVDLISLVEAGTIDYAFEYQSVAVQHHLKYIKLPDQINLGNPKYAYFYGKVIVKILVGTDKEKSIAMSPIIYGITVLDNAPHRSEALKFLKFLLGNTGREIFEEKGQPYLDEFIVYGKIPEELRSIAGSES.

The signal sequence occupies residues 1–22; the sequence is MAIYLDKLKMPIIIGLIVLIIA.

It belongs to the bacterial solute-binding protein 1 family. WtpA subfamily.

This is an uncharacterized protein from Staphylothermus marinus (strain ATCC 43588 / DSM 3639 / JCM 9404 / F1).